The chain runs to 695 residues: Tail-specific protease (695 aa).

An N-terminal signal peptide occupies residues 1–29; sequence MVMKFKMSKNVICYTWLSVCLSSAIPAFA. The PDZ domain occupies 256–316; that stretch reads IGTTLQSEDD…RLEDLVEKIK (61 aa). Active-site charge relay system residues include Ser-459, Asp-470, and Lys-484.

It belongs to the peptidase S41A family.

The protein resides in the cell inner membrane. The enzyme catalyses The enzyme shows specific recognition of a C-terminal tripeptide, Xaa-Yaa-Zaa, in which Xaa is preferably Ala or Leu, Yaa is preferably Ala or Tyr, and Zaa is preferably Ala, but then cleaves at a variable distance from the C-terminus. A typical cleavage is -Ala-Ala-|-Arg-Ala-Ala-Lys-Glu-Asn-Tyr-Ala-Leu-Ala-Ala.. In terms of biological role, involved in the cleavage of a C-terminal peptide of 11 residues from the precursor form of penicillin-binding protein 3 (PBP3). May be involved in protection of the bacterium from thermal and osmotic stresses. The sequence is that of Tail-specific protease (prc) from Haemophilus influenzae (strain ATCC 51907 / DSM 11121 / KW20 / Rd).